A 252-amino-acid polypeptide reads, in one-letter code: Major prion protein (252 aa).

The signal sequence occupies residues 1 to 28 (MAHLGYWMLLLFVATWSDVGLCKKRPKP). The tract at residues 23-229 (KKRPKPGGGW…ESQAAYQRAA (207 aa)) is interaction with GRB2, ERI3 and SYN1. The segment at 26 to 109 (PKPGGGWNTG…KPSKPKTSMK (84 aa)) is disordered. A run of 5 repeats spans residues 51–59 (PPQGGGWGQ), 60–67 (PHGGGWGQ), 68–75 (PHGGGWGQ), 76–83 (PHGGGWGQ), and 84–92 (PHGGGWGQG). The interval 51–92 (PPQGGGWGQPHGGGWGQPHGGGWGQPHGGGWGQPHGGGWGQG) is 5 X 8 AA tandem repeats of P-H-G-G-G-W-G-Q. Gly residues predominate over residues 53–93 (QGGGWGQPHGGGWGQPHGGGWGQPHGGGWGQPHGGGWGQGG). 12 residues coordinate Cu(2+): His-61, Gly-62, Gly-63, His-69, Gly-70, Gly-71, His-77, Gly-78, Gly-79, His-85, Gly-86, and Gly-87. A disulfide bridge connects residues Cys-178 and Cys-213. N-linked (GlcNAc...) asparagine glycans are attached at residues Asn-180 and Asn-196. Residue Ala-229 is the site of GPI-anchor amidated alanine attachment. The propeptide at 230 to 252 (GVLLFSSPPVILLISFLIFLIVG) is removed in mature form.

It belongs to the prion family. As to quaternary structure, monomer and homodimer. Has a tendency to aggregate into amyloid fibrils containing a cross-beta spine, formed by a steric zipper of superposed beta-strands. Soluble oligomers may represent an intermediate stage on the path to fibril formation. Copper binding may promote oligomerization. Interacts with GRB2, APP, ERI3/PRNPIP and SYN1. Mislocalized cytosolically exposed PrP interacts with MGRN1; this interaction alters MGRN1 subcellular location and causes lysosomal enlargement. Interacts with KIAA1191.

It is found in the cell membrane. The protein localises to the golgi apparatus. Its function is as follows. Its primary physiological function is unclear. Has cytoprotective activity against internal or environmental stresses. May play a role in neuronal development and synaptic plasticity. May be required for neuronal myelin sheath maintenance. May play a role in iron uptake and iron homeostasis. Soluble oligomers are toxic to cultured neuroblastoma cells and induce apoptosis (in vitro). Association with GPC1 (via its heparan sulfate chains) targets PRNP to lipid rafts. Also provides Cu(2+) or Zn(2+) for the ascorbate-mediated GPC1 deaminase degradation of its heparan sulfate side chains. The chain is Major prion protein (PRNP) from Oryctolagus cuniculus (Rabbit).